The primary structure comprises 176 residues: MAASTDIAGLEESFRKFAIHGDPKASGQEMNGKNWAKLCKDCKVADGKAVTGTDVDIVFSKVKAKSARVINYEEFKKALEELATKRFKGKSKEEAFDAICQLIAGKEPANIGVTKAKTGGAVDRLTDTSKYTGSHKERFDESGKGKGIAGRQDILDDSGYVSAYKNAGTYDAKVKK.

Ala2 carries the N-acetylalanine modification. The interval 132 to 152 (TGSHKERFDESGKGKGIAGRQ) is disordered. Positions 134–144 (SHKERFDESGK) are enriched in basic and acidic residues.

This sequence belongs to the TPPP family.

Its subcellular location is the cytoplasm. The protein resides in the cytoskeleton. Regulator of microtubule dynamic that has microtubule bundling activity. Required for embryo implantation; possibly by regulating beta-catenin. Also required for decidualization via regulation of beta-catenin. This chain is Tubulin polymerization-promoting protein family member 3, found in Mus musculus (Mouse).